We begin with the raw amino-acid sequence, 261 residues long: Triosephosphate isomerase (261 aa).

10–12 (NWK) serves as a coordination point for substrate. The Electrophile role is filled by His-100. The Proton acceptor role is filled by Glu-172. Residues Gly-178, Ser-218, and 239–240 (GG) each bind substrate.

Belongs to the triosephosphate isomerase family. In terms of assembly, homodimer.

The protein localises to the cytoplasm. It carries out the reaction D-glyceraldehyde 3-phosphate = dihydroxyacetone phosphate. It functions in the pathway carbohydrate biosynthesis; gluconeogenesis. The protein operates within carbohydrate degradation; glycolysis; D-glyceraldehyde 3-phosphate from glycerone phosphate: step 1/1. Functionally, involved in the gluconeogenesis. Catalyzes stereospecifically the conversion of dihydroxyacetone phosphate (DHAP) to D-glyceraldehyde-3-phosphate (G3P). In Saccharopolyspora erythraea (strain ATCC 11635 / DSM 40517 / JCM 4748 / NBRC 13426 / NCIMB 8594 / NRRL 2338), this protein is Triosephosphate isomerase.